The sequence spans 327 residues: Transaldolase (327 aa).

The active-site Schiff-base intermediate with substrate is lysine 132.

It belongs to the transaldolase family. Type 1 subfamily. Homodimer.

The protein localises to the cytoplasm. The catalysed reaction is D-sedoheptulose 7-phosphate + D-glyceraldehyde 3-phosphate = D-erythrose 4-phosphate + beta-D-fructose 6-phosphate. Its pathway is carbohydrate degradation; pentose phosphate pathway; D-glyceraldehyde 3-phosphate and beta-D-fructose 6-phosphate from D-ribose 5-phosphate and D-xylulose 5-phosphate (non-oxidative stage): step 2/3. Transaldolase is important for the balance of metabolites in the pentose-phosphate pathway. This Chlamydia felis (strain Fe/C-56) (Chlamydophila felis) protein is Transaldolase.